The following is a 226-amino-acid chain: uncharacterized protein (226 aa).

It to L.innocua lin2408 and lin2600.

This is an uncharacterized protein from Listeria innocua serovar 6a (strain ATCC BAA-680 / CLIP 11262).